The sequence spans 410 residues: Lipid droplet-regulating VLDL assembly factor AUP1 (410 aa).

Met-1 is subject to N-acetylmethionine. Residues 1 to 20 lie on the Cytoplasmic side of the membrane; that stretch reads MELPSGPGPERLFDSHRLPG. Ser-5 is modified (phosphoserine). Residues 21–41 lie within the membrane without spanning it; that stretch reads DCFLLLVLLLYAPVGFCLLVL. Over 42–410 the chain is Cytoplasmic; it reads RLFLGIHVFL…FTERRAQEAD (369 aa). Residues 255 to 295 are disordered; that stretch reads TGTRLTPADKAEHMKRQRHPRLRPQSAQSSFPPSPGPSPDV. Phosphoserine is present on residues Ser-288 and Ser-292. The CUE domain occupies 296–338; the sequence is QLATLAQRVKEVLPHVPLGVIQRDLAKTGCVDLTITNLLEGAV. Residues 350–369 are disordered; sequence QSLPTASASKFPSSGPVTPQ. Ser-363 is modified (phosphoserine). Phosphothreonine is present on Thr-367.

The protein belongs to the AUP1 family. In terms of assembly, identified in a complex that contains SEL1L, OS9, FAF2/UBXD8, UBE2J1/UBC6E and AUP1. Interacts with the cytoplasmic tail of ITGA2B, ITGA1, ITGA2, ITGA5, ITGAV and ITGAM. Interacts (via C-terminus) with ubiquitin-conjugating enzyme UBE2G2; the interaction recruits UBE2G2 to lipid droplets. Interacts with ubiquitin ligases AMFR/gp78 and RNF139/TRC8; this promotes interaction of UBE2G2 with AMFR and RNF139. Interacts with apolipoprotein APOB. As to quaternary structure, (Microbial infection) Interacts with Dengue virus NS4A; the interaction occurs in the presence of Dengue virus NS4B and induces lipophagy which facilitates production of virus progeny. In terms of processing, monoubiquitinated and diubiquitinated. Post-translationally, (Microbial infection) Not ubiquitinated following Dengue virus infection. As to expression, detected in blood platelets and leukocytes (at protein level). Ubiquitous. Highly expressed in placenta, liver, kidney, skeletal muscle, heart and brain.

It is found in the endoplasmic reticulum membrane. Its subcellular location is the lipid droplet. The protein localises to the cytoplasmic vesicle. It localises to the autophagosome. Functionally, plays a role in the translocation of terminally misfolded proteins from the endoplasmic reticulum lumen to the cytoplasm and their degradation by the proteasome. Plays a role in lipid droplet formation. Induces lipid droplet clustering. Recruits ubiquitin-conjugating enzyme UBE2G2 to lipid droplets which facilitates its interaction with ubiquitin ligases AMFR/gp78 and RNF139/TRC8, leading to sterol-induced ubiquitination of HMGCR and its subsequent proteasomal degradation. Also required for the degradation of INSIG1, SREBF1 and SREBF2. Plays a role in regulating assembly and secretion of very low density lipoprotein particles and stability of apolipoprotein APOB. In terms of biological role, (Microbial infection) Following Dengue virus infection, required for induction of lipophagy which facilitates production of virus progeny particles. This Homo sapiens (Human) protein is Lipid droplet-regulating VLDL assembly factor AUP1.